Reading from the N-terminus, the 326-residue chain is MHRTTRIKITELNPHLMCVLCGGYFIDATTIIECLHSFCKTCIVRYLETSKYCPICDVQVHKTRPLLNIRSDKTLQDIVYKLVPGLFKNEMKRRRDFYAAHPSADAANGSNEDRGEVADEDKRIITDDEIISLSIEFFDQNRLDRKINKDKEKSKEEVNDKRYLRCPAAMTVMHLRKFLRSKMDIPNTFQIDVMYEEEPLKDYYTLMDIAYIYTWRRNGPLPLKYRVRPTCKRMKISHQRDGLTNTGELESDSGSDKANSPAGGIPSTSSCLPSPSTPVQSPHPQFPHISSTMNGTSSSPSGNHQSSFANRPRKSSVNGSSATSSG.

The RING-type zinc-finger motif lies at 18–57 (CVLCGGYFIDATTIIECLHSFCKTCIVRYLETSKYCPICD). The short motif at 81-95 (KLVPGLFKNEMKRRR) is the Nuclear localization signal element. An interaction with PHC2 region spans residues 162-182 (RYLRCPAAMTVMHLRKFLRSK). Residues 164–228 (LRCPAAMTVM…GPLPLKYRVR (65 aa)) are interaction with E4F1. The segment at 236–326 (ISHQRDGLTN…VNGSSATSSG (91 aa)) is disordered. Composition is skewed to low complexity over residues 266-278 (PSTS…PSTP), 290-303 (SSTM…PSGN), and 315-326 (SSVNGSSATSSG).

Component of a PRC1-like complex. Identified in a PRC1-like HPRC-H complex with CBX2, CBX4, CBX8, PHC1, PHC2, PHC3 RING1 and RNF2. Interacts with RNF2/RING2. Interacts with RING1. Part of a complex that contains RNF2, UB2D3 and BMI1, where RNF2 and BMI1 form a tight heterodimer, and UB2D3 interacts only with RNF2. The complex composed of RNF2, UB2D3 and BMI1 binds nucleosomes, and has activity only with nucleosomal histone H2A. Interacts with CBX7 and CBX8. Interacts with SPOP. Part of a complex consisting of BMI1, CUL3 and SPOP. Interacts with E4F1. Interacts with PHC2. Interacts with zinc finger protein ZNF277. May be part of a complex including at least ZNF277, BMI1 and RNF2/RING2. May be polyubiquitinated; which does not lead to proteasomal degradation. Monoubiquitinated.

Its subcellular location is the nucleus. It is found in the cytoplasm. Its function is as follows. Component of a Polycomb group (PcG) multiprotein PRC1-like complex, a complex class required to maintain the transcriptionally repressive state of many genes, including Hox genes, throughout development. PcG PRC1 complex acts via chromatin remodeling and modification of histones; it mediates monoubiquitination of histone H2A 'Lys-119', rendering chromatin heritably changed in its expressibility. The complex composed of RNF2, UB2D3 and BMI1 binds nucleosomes, and has activity only with nucleosomal histone H2A. In the PRC1-like complex, regulates the E3 ubiquitin-protein ligase activity of RNF2/RING2. This is Polycomb complex protein BMI-1 (BMI1) from Bos taurus (Bovine).